The following is a 393-amino-acid chain: Neuroplastin (393 aa).

Residues 1–28 (MSGSSLPGALALSLLLVSGSLLPGPGAA) form the signal peptide. 3 Ig-like domains span residues 29-134 (QNAG…PSIT), 148-234 (PRIV…IEVK), and 237-327 (PDIT…ASVS). Residues 29 to 338 (QNAGFVKSPM…VLRVRSHLAP (310 aa)) are Extracellular-facing. A disulfide bridge links cysteine 52 with cysteine 116. Positions 149-161 (RIVTSEEVIIRDS) are narpin; mediates binding with FGFR1 and has antidepressant-like activity. Residues cysteine 169 and cysteine 217 are joined by a disulfide bond. N-linked (GlcNAc...) asparagine glycosylation is found at asparagine 170, asparagine 196, asparagine 228, asparagine 283, asparagine 295, and asparagine 316. An intrachain disulfide couples cysteine 258 to cysteine 315. Residues 339–359 (LWPFLGILAEIIILVVIIVVY) form a helical membrane-spanning segment. Topologically, residues 360–393 (EKRKRPDEVPDAGPMKTNSTNNHKDKNLRQRNTN) are cytoplasmic. The interval 366-393 (DEVPDAGPMKTNSTNNHKDKNLRQRNTN) is disordered.

In terms of assembly, interacts with ATP2B1; this interaction stabilizes ATP2B1 and increases ATPase activity; this interaction controls T cell calcium homeostasis following T cell activation. Interacts with XKR8; promoting its localization at the cell membrane. Isoform 1 and isoform 2 are N-glycosylated. In terms of tissue distribution, isoform 1 is ubiquitously expressed. Isoform 2 is brain-specific. In brain isoform 2 is highly expressed in hippocampus and cerebral cortex and weakly in cerebellum and lower brain regions. In the hippocampus isoform 2 is found in the dentate gyrus and CA1-CA4, the striatum oriens of CA3 shows the higher level.

Its subcellular location is the cell membrane. The protein resides in the postsynaptic density. Its function is as follows. Probable homophilic and heterophilic cell adhesion molecule involved in long term potentiation at hippocampal excitatory synapses through activation of p38MAPK. May also regulate neurite outgrowth by activating the FGFR1 signaling pathway. May play a role in synaptic plasticity. Also acts as a chaperone for ATP2B1; stabilizes ATP2B1 and increases its ATPase activity. Promotes localization of XKR8 at the cell membrane. This Rattus norvegicus (Rat) protein is Neuroplastin (Nptn).